Reading from the N-terminus, the 217-residue chain is Probable GTP-binding protein EngB (217 aa).

Residues 37–214 enclose the EngB-type G domain; sequence AGVEVAFAGR…RAAMARLIGE (178 aa). Residues 45-52, 72-76, 92-95, 159-162, and 193-195 contribute to the GTP site; these read GRSNVGKS, GRTQE, DMPG, TKAD, and TSS. S52 and T74 together coordinate Mg(2+).

Belongs to the TRAFAC class TrmE-Era-EngA-EngB-Septin-like GTPase superfamily. EngB GTPase family. The cofactor is Mg(2+).

Necessary for normal cell division and for the maintenance of normal septation. The polypeptide is Probable GTP-binding protein EngB (Nitrobacter hamburgensis (strain DSM 10229 / NCIMB 13809 / X14)).